Reading from the N-terminus, the 256-residue chain is Low molecular mass lipoprotein 3 (256 aa).

A signal peptide spans 1 to 17 (MKPAIVILCLFVASLYA).

This sequence belongs to the 30 kDa lipoprotein family. Detected in larval hemolymph (at protein level).

Its subcellular location is the secreted. This is Low molecular mass lipoprotein 3 from Bombyx mori (Silk moth).